Consider the following 214-residue polypeptide: Probable nicotinate-nucleotide adenylyltransferase (214 aa).

Belongs to the NadD family.

The enzyme catalyses nicotinate beta-D-ribonucleotide + ATP + H(+) = deamido-NAD(+) + diphosphate. Its pathway is cofactor biosynthesis; NAD(+) biosynthesis; deamido-NAD(+) from nicotinate D-ribonucleotide: step 1/1. Catalyzes the reversible adenylation of nicotinate mononucleotide (NaMN) to nicotinic acid adenine dinucleotide (NaAD). This Rhodopirellula baltica (strain DSM 10527 / NCIMB 13988 / SH1) protein is Probable nicotinate-nucleotide adenylyltransferase.